A 528-amino-acid chain; its full sequence is Peptide chain release factor 3 (528 aa).

The 269-residue stretch at 10 to 278 (DKRRTFGIIS…TFVDLAPAPQ (269 aa)) folds into the tr-type G domain. GTP-binding positions include 19–26 (SHPDAGKT), 87–91 (DTPGH), and 141–144 (NKLD).

It belongs to the TRAFAC class translation factor GTPase superfamily. Classic translation factor GTPase family. PrfC subfamily.

It localises to the cytoplasm. Functionally, increases the formation of ribosomal termination complexes and stimulates activities of RF-1 and RF-2. It binds guanine nucleotides and has strong preference for UGA stop codons. It may interact directly with the ribosome. The stimulation of RF-1 and RF-2 is significantly reduced by GTP and GDP, but not by GMP. The protein is Peptide chain release factor 3 of Oleidesulfovibrio alaskensis (strain ATCC BAA-1058 / DSM 17464 / G20) (Desulfovibrio alaskensis).